The chain runs to 368 residues: MTQSVMNPENYQVQLDEKAEALSAMFSEFNVPELEVFSSPAENYRMRAEFRVWHEGDEMYYVMFNQETKEKYRVDYFLPASRLINDLMPLLTEAVKESKTLRYKMFQVDFLSTLSGEILVSMLYHRQLDDAWKEEAKALKQRLNDEGFNLNIIGRARKMKIVLDQEFVIEKLKVNDDILTYKQVENSFTQPNGIVAQKMLEWAVDCTQNSQGDLLELYCGNGNFSLALAKNFDRVLATELAKPSVDSAQYNIAANNIDNVQIIRMSAEDFTDAMEGKREFRRLKDQNIDLKSYNCNTIFVDPPRSGMDEGTCKMVQGYERIMYISCNPETLKENLEILSQTHNITRFALFDQFPYTHHMEAGVFLERK.

Gln190, Tyr218, Asn223, Glu239, and Asp301 together coordinate S-adenosyl-L-methionine. Residue Cys326 is the Nucleophile of the active site. Glu360 acts as the Proton acceptor in catalysis.

It belongs to the class I-like SAM-binding methyltransferase superfamily. RNA M5U methyltransferase family. TrmA subfamily.

It carries out the reaction uridine(54) in tRNA + S-adenosyl-L-methionine = 5-methyluridine(54) in tRNA + S-adenosyl-L-homocysteine + H(+). The enzyme catalyses uridine(341) in tmRNA + S-adenosyl-L-methionine = 5-methyluridine(341) in tmRNA + S-adenosyl-L-homocysteine + H(+). Its function is as follows. Dual-specificity methyltransferase that catalyzes the formation of 5-methyluridine at position 54 (m5U54) in all tRNAs, and that of position 341 (m5U341) in tmRNA (transfer-mRNA). This Aliivibrio fischeri (strain MJ11) (Vibrio fischeri) protein is tRNA/tmRNA (uracil-C(5))-methyltransferase.